Reading from the N-terminus, the 78-residue chain is UPF0349 protein SSP1836 (78 aa).

This sequence belongs to the UPF0349 family.

The polypeptide is UPF0349 protein SSP1836 (Staphylococcus saprophyticus subsp. saprophyticus (strain ATCC 15305 / DSM 20229 / NCIMB 8711 / NCTC 7292 / S-41)).